Consider the following 528-residue polypeptide: Phosphoenolpyruvate carboxykinase (ATP) (528 aa).

Substrate is bound by residues arginine 56, tyrosine 192, and lysine 198. ATP-binding positions include lysine 198, histidine 217, and 233–241; that span reads GLSGTGKTT. 2 residues coordinate Mn(2+): lysine 198 and histidine 217. Aspartate 254 is a Mn(2+) binding site. ATP is bound by residues glutamate 282, arginine 319, and threonine 444. Arginine 319 provides a ligand contact to substrate.

The protein belongs to the phosphoenolpyruvate carboxykinase (ATP) family. Requires Mn(2+) as cofactor.

It is found in the cytoplasm. It catalyses the reaction oxaloacetate + ATP = phosphoenolpyruvate + ADP + CO2. Its pathway is carbohydrate biosynthesis; gluconeogenesis. In terms of biological role, involved in the gluconeogenesis. Catalyzes the conversion of oxaloacetate (OAA) to phosphoenolpyruvate (PEP) through direct phosphoryl transfer between the nucleoside triphosphate and OAA. The polypeptide is Phosphoenolpyruvate carboxykinase (ATP) (Bacillus cereus (strain G9842)).